Here is a 365-residue protein sequence, read N- to C-terminus: MESENQIAILDYIFNQVNQPNQPKIVWFSGEGEDEKINFLIRLNDFFKPKFVENTNDSSFLLSFRNHVETKNSTPLTQANFANIANKLLAVLFGSLQWKQLNKPTGNWFLVILFLALLWLRQCWLKLQLTKISKFVNQKGILSFIKQQWPILTTLVTVGTTLGTPVFSLTIAQQDGIKQNAGNDVFIFLIIFSVFSISLGLVSSLIFLVSSLFSIRQKKTLDALDKVLSKFIDKYFFLDEKEIKKQLKYQFKNNGVCFFYGFDFDQAEFLEQSMNLMLLLKQTNCFILVGCKESEMTLIKNKIEPNINLKQNSFYLDLSNEISQVEQISKFNLLFRQLRLSSELFYLEDFFDYLTTAKQIVNFLF.

The next 3 helical transmembrane spans lie at 105–125 (TGNW…QCWL), 151–171 (ILTT…SLTI), and 187–207 (IFLI…SLIF).

The protein resides in the cell membrane. This is an uncharacterized protein from Mycoplasma genitalium (strain ATCC 33530 / DSM 19775 / NCTC 10195 / G37) (Mycoplasmoides genitalium).